The sequence spans 481 residues: Putative F-box/FBD/LRR-repeat protein At5g25850 (481 aa).

Residues 19-69 (INRLSQLSDPLICQILSHLPIKEVVTTSVLSTRWKNIWLSVPSLELIYSIF) enclose the F-box domain. 3 LRR repeats span residues 123–151 (VRRV…KLFH), 173–198 (VWFP…KIDV), and 328–356 (HVTL…IVAF). One can recognise an FBD domain in the interval 401 to 452 (QLSFSSVPKCLLSSLQFVELNAQILRFDGEILNLAKYFLENSSILQKLTLHP).

In Arabidopsis thaliana (Mouse-ear cress), this protein is Putative F-box/FBD/LRR-repeat protein At5g25850.